We begin with the raw amino-acid sequence, 827 residues long: Probable inorganic carbon transporter subunit DabA2 (827 aa).

Zn(2+)-binding residues include Cys351, Asp353, His524, and Cys539.

Belongs to the inorganic carbon transporter (TC 9.A.2) DabA family. In terms of assembly, forms a complex with DabB2, possibly a heterodimer. Zn(2+) is required as a cofactor.

The protein resides in the cell inner membrane. Uptake of inorganic carbon by cells in the presence of thiosulphate is fully inhibited by the uncouplers carbonyl cyanide m-chlorophenyl hydrazone (CCCP), carbonyl cyanide p-trifluoromethoxyphenyl hydrazone (FCCP), S13 or SF6847. Not inhibited by the ATPase inhibitor N,N-dicyclohexylcarbodiimide (DCCD). Inorganic carbon uptake is inhibited by the ionophore CCCP, suggesting uptake is coupled to a cation gradient. Functionally, part of an energy-coupled inorganic carbon pump; its substrate may be carbon dioxide. Expression of both dabA2 and dabB2 (DAB2) restores growth in ambient air to E.coli deleted of its carbonic anhydrase genes (called CAfree, deletion of 'can' and 'cynT'); neither dabA2 or dabB2 alone is sufficient. Rescue is pH-independent, suggesting it transports CO(2) and not carbonate ions. Together the genes allow greater than normal uptake of inorganic carbon by E.coli. Uptake of carbon dioxide rather than bicarbonate has been suggested based on kinetic calculations. The sequence is that of Probable inorganic carbon transporter subunit DabA2 from Halothiobacillus neapolitanus (strain ATCC 23641 / c2) (Thiobacillus neapolitanus).